Here is a 719-residue protein sequence, read N- to C-terminus: Pesticidal crystal protein Cry1Ib (719 aa).

Belongs to the delta endotoxin family.

Promotes colloidosmotic lysis by binding to the midgut epithelial cells of certain coleopteran and lepidopteran species. Active on Plutella xylostella but not on Bombyx mori. This is Pesticidal crystal protein Cry1Ib (cry1Ib) from Bacillus thuringiensis subsp. entomocidus.